The chain runs to 191 residues: uncharacterized protein (191 aa).

4 helical membrane passes run 12–32 (FAFL…FFTL), 48–68 (LVAL…LTLF), 92–112 (YISV…LLSL), and 168–188 (IFCL…SCAF).

It is found in the membrane. This is an uncharacterized protein from Saccharomyces cerevisiae (strain ATCC 204508 / S288c) (Baker's yeast).